The sequence spans 86 residues: Small ribosomal subunit protein bS18c (86 aa).

The protein belongs to the bacterial ribosomal protein bS18 family. Part of the 30S ribosomal subunit.

Its subcellular location is the plastid. It is found in the chloroplast. The protein is Small ribosomal subunit protein bS18c of Larix laricina (Tamarack).